The primary structure comprises 277 residues: Carbonyl reductase [NADPH] 3 (277 aa).

The residue at position 2 (serine 2) is an N-acetylserine. Residues 10–34 (VTGA…GDVV), 38–42 (RDEAR), 63–64 (DI), and asparagine 90 each bind NADP(+). Serine 30 is modified (phosphoserine). Serine 140 lines the substrate pocket. Tyrosine 194 functions as the Proton acceptor in the catalytic mechanism. Residue 194–198 (YGVSK) coordinates NADP(+).

The protein belongs to the short-chain dehydrogenases/reductases (SDR) family.

The protein localises to the cytoplasm. It catalyses the reaction a secondary alcohol + NADP(+) = a ketone + NADPH + H(+). The enzyme catalyses a quinone + NADPH + H(+) = a quinol + NADP(+). In terms of biological role, catalyzes the NADPH-dependent reduction of carbonyl compounds to their corresponding alcohols. Has low NADPH-dependent oxidoreductase activity. Acts on several orthoquinones, as well as on non-quinone compounds, such as isatin or on the anticancer drug oracin. Best substrates for CBR3 is 1,2- naphthoquinone, hence could play a role in protection against cytotoxicity of exogenous quinones. Exerts activity toward ortho-quinones but not paraquinones. No endogenous substrate for CBR3 except isatin has been identified. This Rattus norvegicus (Rat) protein is Carbonyl reductase [NADPH] 3.